We begin with the raw amino-acid sequence, 245 residues long: Probable inactive carboxylesterase Os04g0669700 (245 aa).

Catalysis depends on charge relay system residues Ser-115 and His-201.

The protein belongs to the AB hydrolase superfamily. AB hydrolase 2 family.

This Oryza sativa subsp. japonica (Rice) protein is Probable inactive carboxylesterase Os04g0669700.